Reading from the N-terminus, the 574-residue chain is Acyloxyacyl hydrolase (574 aa).

Residues 1-22 (MKFPWKVFKTTLLLLLLSHSLA) form the signal peptide. A propeptide spanning residues 23–33 (SVPSEDQPGDS) is cleaved from the precursor. One can recognise a Saposin B-type domain in the interval 36-117 (HGQSCLGCVV…YALEFCKRGA (82 aa)). The interval 37-69 (GQSCLGCVVLVSVIEQLAEVHNSSVQVAMERLC) is important for enzyme activity, localization to cytoplasmic vesicles, and protein stability. 8 cysteine pairs are disulfide-bonded: C40/C113, C43/C107, C69/C82, C122/C452, C159/C168, C205/C229, C248/C328, and C375/C458. N58 is a glycosylation site (N-linked (GlcNAc...) asparagine). A lipopolysaccharide binding region spans residues 172–176 (ELSIK). Positions 183, 185, 187, 189, 204, 206, 207, 209, 212, 222, 226, 228, 230, 232, and 244 each coordinate Ca(2+). An N-linked (GlcNAc...) asparagine glycan is attached at N206. The active site involves S262. 2 N-linked (GlcNAc...) asparagine glycosylation sites follow: N408 and N465.

Heterodimer of the large and small subunits; disulfide-linked. It depends on Ca(2+) as a cofactor. In terms of processing, cleaved into a large and a small subunit. Post-translationally, the small subunit is N-glycosylated. As to expression, detected in peritoneal macrophages (at protein level). Strongly expressed in kidney cortex, where it may be produced by proximal tubule cells. In liver, expressed at high levels in Kupffer cells. Expressed by dendritic cells. Detected at low levels in alveolar macrophages.

Its subcellular location is the secreted. It is found in the cytoplasmic vesicle. The catalysed reaction is a 3-(acyloxy)acyl derivative of bacterial toxin + H2O = a 3-hydroxyacyl derivative of bacterial toxin + a fatty acid + H(+). In terms of biological role, removes the secondary (acyloxyacyl-linked) fatty acyl chains from the lipid A region of bacterial lipopolysaccharides (LPS). By breaking down LPS, terminates the host response to bacterial infection and prevents prolonged and damaging inflammatory responses. In peritoneal macrophages, seems to be important for recovery from a state of immune tolerance following infection by Gram-negative bacteria. The protein is Acyloxyacyl hydrolase of Mus musculus (Mouse).